Reading from the N-terminus, the 537-residue chain is uncharacterized protein (537 aa).

4 disordered regions span residues Met-1–Phe-33, Ser-71–Gln-98, Ser-197–Lys-220, and Gly-516–Asn-537. Position 72 is a phosphoserine (Ser-72). The segment covering Ser-88–Gln-98 has biased composition (basic and acidic residues). The segment covering Ser-197–Glu-214 has biased composition (polar residues). Residues Gly-516–Lys-529 are compositionally biased toward basic residues.

Belongs to the NAD kinase family.

This is an uncharacterized protein from Schizosaccharomyces pombe (strain 972 / ATCC 24843) (Fission yeast).